A 107-amino-acid chain; its full sequence is Benzene 1,2-dioxygenase system ferredoxin subunit (107 aa).

The Rieske domain maps to 4 to 99; it reads TYILRQSDLP…IKVEGDEVHV (96 aa). [2Fe-2S] cluster is bound by residues Cys-43, His-45, Cys-62, and His-65.

Belongs to the bacterial ring-hydroxylating dioxygenase ferredoxin component family. This dioxygenase system consists of four proteins: the two subunits of the hydroxylase component (BnzA and BnzB), a ferredoxin (BnzC) and a ferredoxin reductase (BnzD).

It participates in aromatic compound metabolism; benzene degradation; catechol from benzene: step 1/2. This protein seems to be a 2Fe-2S ferredoxin. This Pseudomonas putida (Arthrobacter siderocapsulatus) protein is Benzene 1,2-dioxygenase system ferredoxin subunit (bnzC).